The chain runs to 377 residues: MKENSVGLVKTKYVTFKDDFYFESGRILSPITVAYETYGKLNEKKDNAILICHALTGSAHAAGYNSPDDQKPGWWDDMIGPGKAFDTDKYFIICSNFLGSCYGTTGPASIDPSTGKPYGLKFPVFTVKDMVKLQKKLIDYLGIEKLLCVAGGSMGGMQALEWAVTFPEKTYSIIPIATAGRITPMAIAFNTIGRFAIMKDPNWMNGDYYGKTFPRDGLAIARMAGHITYMSDKSFHKKFGRRYATFGGIYDFFGYFEVENYLRYNGYKFTERFDANSYLYIIKAMDIFDLSYGYGSYEEAIGRIEADSLFITFTSDFLFPSYQTEEIVNIMKNHGKNPEWVNIESDYGHDAFLLEFDTQTSCIKEFLSKIYNKVANQ.

Residues 47–355 (NAILICHALT…DYGHDAFLLE (309 aa)) enclose the AB hydrolase-1 domain. Catalysis depends on Ser153, which acts as the Nucleophile. Residue Arg222 coordinates substrate. Active-site residues include Asp316 and His349. Asp350 is a binding site for substrate.

This sequence belongs to the AB hydrolase superfamily. MetX family. Homodimer.

It localises to the cytoplasm. The enzyme catalyses L-homoserine + acetyl-CoA = O-acetyl-L-homoserine + CoA. Its pathway is amino-acid biosynthesis; L-methionine biosynthesis via de novo pathway; O-acetyl-L-homoserine from L-homoserine: step 1/1. Transfers an acetyl group from acetyl-CoA to L-homoserine, forming acetyl-L-homoserine. This chain is Homoserine O-acetyltransferase, found in Deferribacter desulfuricans (strain DSM 14783 / JCM 11476 / NBRC 101012 / SSM1).